The following is a 308-amino-acid chain: Pseudouridine-5'-phosphate glycosidase (308 aa).

Glu-26 acts as the Proton donor in catalysis. Positions 87 and 107 each coordinate substrate. Mn(2+) is bound at residue Asp-139. 141 to 143 (SAD) is a binding site for substrate. Lys-160 (nucleophile) is an active-site residue.

This sequence belongs to the pseudouridine-5'-phosphate glycosidase family. As to quaternary structure, homotrimer. Mn(2+) is required as a cofactor.

It catalyses the reaction D-ribose 5-phosphate + uracil = psi-UMP + H2O. Catalyzes the reversible cleavage of pseudouridine 5'-phosphate (PsiMP) to ribose 5-phosphate and uracil. Functions biologically in the cleavage direction, as part of a pseudouridine degradation pathway. This Legionella pneumophila subsp. pneumophila (strain Philadelphia 1 / ATCC 33152 / DSM 7513) protein is Pseudouridine-5'-phosphate glycosidase.